The primary structure comprises 482 residues: BTB/POZ domain-containing protein 6-B (482 aa).

A BTB domain is found at 80-150; the sequence is ADVHFVVGPP…MYSDEIELEA (71 aa).

As to quaternary structure, interacts with cul3. Interacts (via BTB domain) with zbtb16/plzf. As to expression, in embryos, expressed in the cranial ganglia.

It localises to the cytoplasm. Its subcellular location is the nucleus. Its function is as follows. Adapter protein for the cul3 E3 ubiquitin-protein ligase complex. Promotes the export of zbtb16/plzf from the nucleus to the cytoplasm and targets zbtb16/plzf for ubiquitination and degradation. Up-regulates neurog1 expression and antagonizes zbtb16/plzf, to promote neurogenesis. The sequence is that of BTB/POZ domain-containing protein 6-B (btbd6b) from Danio rerio (Zebrafish).